Consider the following 384-residue polypeptide: tRNA-specific 2-thiouridylase MnmA (384 aa).

ATP-binding positions include 30 to 37 and methionine 56; that span reads GMSGGVDS. The interval 116–118 is interaction with target base in tRNA; sequence NPD. Cysteine 121 acts as the Nucleophile in catalysis. Cysteine 121 and cysteine 218 are disulfide-bonded. Glycine 146 is an ATP binding site. The segment at 168-170 is interaction with tRNA; that stretch reads KDQ. The Cysteine persulfide intermediate role is filled by cysteine 218. The tract at residues 330-331 is interaction with tRNA; the sequence is RY.

The protein belongs to the MnmA/TRMU family.

Its subcellular location is the cytoplasm. It catalyses the reaction S-sulfanyl-L-cysteinyl-[protein] + uridine(34) in tRNA + AH2 + ATP = 2-thiouridine(34) in tRNA + L-cysteinyl-[protein] + A + AMP + diphosphate + H(+). Its function is as follows. Catalyzes the 2-thiolation of uridine at the wobble position (U34) of tRNA, leading to the formation of s(2)U34. This is tRNA-specific 2-thiouridylase MnmA from Haemophilus ducreyi (strain 35000HP / ATCC 700724).